The primary structure comprises 508 residues: Histidine ammonia-lyase (508 aa).

Positions 141–143 (ASG) form a cross-link, 5-imidazolinone (Ala-Gly). Ser-142 carries the 2,3-didehydroalanine (Ser) modification.

The protein belongs to the PAL/histidase family. Post-translationally, contains an active site 4-methylidene-imidazol-5-one (MIO), which is formed autocatalytically by cyclization and dehydration of residues Ala-Ser-Gly.

The protein resides in the cytoplasm. It catalyses the reaction L-histidine = trans-urocanate + NH4(+). The protein operates within amino-acid degradation; L-histidine degradation into L-glutamate; N-formimidoyl-L-glutamate from L-histidine: step 1/3. The protein is Histidine ammonia-lyase of Geobacillus sp. (strain WCH70).